The primary structure comprises 186 residues: Small ribosomal subunit protein eS7 (186 aa).

It belongs to the eukaryotic ribosomal protein eS7 family. As to quaternary structure, component of the small ribosomal subunit. Mature ribosomes consist of a small (40S) and a large (60S) subunit. The 40S subunit contains about 32 different proteins and 1 molecule of RNA (18S). The 60S subunit contains 45 different proteins and 3 molecules of RNA (25S, 5.8S and 5S).

The protein localises to the cytoplasm. In terms of biological role, component of the ribosome, a large ribonucleoprotein complex responsible for the synthesis of proteins in the cell. The small ribosomal subunit (SSU) binds messenger RNAs (mRNAs) and translates the encoded message by selecting cognate aminoacyl-transfer RNA (tRNA) molecules. The large subunit (LSU) contains the ribosomal catalytic site termed the peptidyl transferase center (PTC), which catalyzes the formation of peptide bonds, thereby polymerizing the amino acids delivered by tRNAs into a polypeptide chain. The nascent polypeptides leave the ribosome through a tunnel in the LSU and interact with protein factors that function in enzymatic processing, targeting, and the membrane insertion of nascent chains at the exit of the ribosomal tunnel. RPS7A is involved in nucleolar processing of pre-18S ribosomal RNA and ribosome assembly. The polypeptide is Small ribosomal subunit protein eS7 (RPS7A) (Candida albicans (strain SC5314 / ATCC MYA-2876) (Yeast)).